Consider the following 216-residue polypeptide: Large ribosomal subunit protein uL3 (216 aa).

A compositionally biased stretch (polar residues) spans 133 to 145 (GRATHGNSRSHNV). The interval 133-153 (GRATHGNSRSHNVPGSIGMAQ) is disordered. The residue at position 153 (Gln153) is an N5-methylglutamine.

The protein belongs to the universal ribosomal protein uL3 family. As to quaternary structure, part of the 50S ribosomal subunit. Forms a cluster with proteins L14 and L19. Methylated by PrmB.

Functionally, one of the primary rRNA binding proteins, it binds directly near the 3'-end of the 23S rRNA, where it nucleates assembly of the 50S subunit. This chain is Large ribosomal subunit protein uL3, found in Burkholderia cenocepacia (strain ATCC BAA-245 / DSM 16553 / LMG 16656 / NCTC 13227 / J2315 / CF5610) (Burkholderia cepacia (strain J2315)).